The following is a 141-amino-acid chain: Large ribosomal subunit protein uL16 (141 aa).

Belongs to the universal ribosomal protein uL16 family. In terms of assembly, part of the 50S ribosomal subunit.

Its function is as follows. Binds 23S rRNA and is also seen to make contacts with the A and possibly P site tRNAs. The chain is Large ribosomal subunit protein uL16 from Rhodospirillum centenum (strain ATCC 51521 / SW).